The chain runs to 164 residues: MLRSIQHVEALSSRQISTTSMLLKNRAGKTKSTSNRTQLLTYEMAQKPHHIGVRKSWLTWHSQNLEEFRQSQPLVVAQDEVVRRFIRGFFPQNLVVSGNEIVIKRRGNVLIVAGFLQYSRRLDIRRIYWMFGFAEEFLSILLKQPVKLEMAFVESEEDVAYNYI.

The N-terminal 23 residues, 1–23 (MLRSIQHVEALSSRQISTTSMLL), are a transit peptide targeting the mitochondrion.

Belongs to the universal ribosomal protein uS3 family. Component of the mitochondrial ribosome small subunit (28S) which comprises a 12S rRNA and about 30 distinct proteins.

Its subcellular location is the mitochondrion. This chain is Small ribosomal subunit protein uS3m (mrps-24), found in Caenorhabditis elegans.